A 130-amino-acid chain; its full sequence is Histone H2A type 1-C (130 aa).

The disordered stretch occupies residues 1-22 (MSGRGKQGGKARAKAKSRSSRA). At Ser2 the chain carries N-acetylserine. Ser2 is modified (phosphoserine; by RPS6KA5). A Citrulline; alternate modification is found at Arg4. Symmetric dimethylarginine; by PRMT5; alternate is present on Arg4. N6-(2-hydroxyisobutyryl)lysine; alternate is present on residues Lys6 and Lys10. N6-acetyllysine; alternate is present on Lys6. Residues 7-19 (QGGKARAKAKSRS) show a composition bias toward basic residues. N6-(beta-hydroxybutyryl)lysine; alternate occurs at positions 10 and 14. At Lys10 the chain carries N6-lactoyllysine; alternate. Lys10 carries the post-translational modification N6-succinyllysine; alternate. A Glycyl lysine isopeptide (Lys-Gly) (interchain with G-Cter in ubiquitin); alternate cross-link involves residue Lys14. Residue Lys16 forms a Glycyl lysine isopeptide (Lys-Gly) (interchain with G-Cter in ubiquitin) linkage. The residue at position 37 (Lys37) is an N6-(2-hydroxyisobutyryl)lysine; alternate. N6-(beta-hydroxybutyryl)lysine; alternate is present on Lys37. Position 37 is an N6-crotonyllysine; alternate (Lys37). An N6-(2-hydroxyisobutyryl)lysine mark is found at Lys75 and Lys76. An N6-(2-hydroxyisobutyryl)lysine; alternate modification is found at Lys96. Position 96 is an N6-(beta-hydroxybutyryl)lysine; alternate (Lys96). Lys96 carries the N6-succinyllysine; alternate modification. Lys96 is subject to N6-glutaryllysine; alternate. Gln105 is subject to N5-methylglutamine. Residue Lys119 is modified to N6-(2-hydroxyisobutyryl)lysine; alternate. Lys119 bears the N6-(beta-hydroxybutyryl)lysine; alternate mark. An N6-crotonyllysine; alternate mark is found at Lys119 and Lys120. An N6-glutaryllysine; alternate mark is found at Lys119 and Lys120. Lys120 participates in a covalent cross-link: Glycyl lysine isopeptide (Lys-Gly) (interchain with G-Cter in ubiquitin); alternate. Position 121 is a phosphothreonine; by DCAF1 (Thr121). At Lys126 the chain carries N6-crotonyllysine; alternate. The residue at position 126 (Lys126) is an N6-glutaryllysine; alternate.

This sequence belongs to the histone H2A family. As to quaternary structure, the nucleosome is a histone octamer containing two molecules each of H2A, H2B, H3 and H4 assembled in one H3-H4 heterotetramer and two H2A-H2B heterodimers. The octamer wraps approximately 147 bp of DNA. In terms of processing, deiminated on Arg-4 in granulocytes upon calcium entry. Monoubiquitination of Lys-120 (H2AK119Ub) by RING1, TRIM37 and RNF2/RING2 complex gives a specific tag for epigenetic transcriptional repression and participates in X chromosome inactivation of female mammals. It is involved in the initiation of both imprinted and random X inactivation. Ubiquitinated H2A is enriched in inactive X chromosome chromatin. Ubiquitination of H2A functions downstream of methylation of 'Lys-27' of histone H3 (H3K27me). H2AK119Ub by RNF2/RING2 can also be induced by ultraviolet and may be involved in DNA repair. Monoubiquitination of Lys-120 (H2AK119Ub) by TRIM37 may promote transformation of cells in a number of breast cancers. Following DNA double-strand breaks (DSBs), it is ubiquitinated through 'Lys-63' linkage of ubiquitin moieties by the E2 ligase UBE2N and the E3 ligases RNF8 and RNF168, leading to the recruitment of repair proteins to sites of DNA damage. Ubiquitination at Lys-14 and Lys-16 (H2AK13Ub and H2AK15Ub, respectively) in response to DNA damage is initiated by RNF168 that mediates monoubiquitination at these 2 sites, and 'Lys-63'-linked ubiquitin are then conjugated to monoubiquitin; RNF8 is able to extend 'Lys-63'-linked ubiquitin chains in vitro. Deubiquitinated by USP51 at Lys-14 and Lys-16 (H2AK13Ub and H2AK15Ub, respectively) after damaged DNA is repaired. H2AK119Ub and ionizing radiation-induced 'Lys-63'-linked ubiquitination (H2AK13Ub and H2AK15Ub) are distinct events. Post-translationally, phosphorylation on Ser-2 (H2AS1ph) is enhanced during mitosis. Phosphorylation on Ser-2 by RPS6KA5/MSK1 directly represses transcription. Acetylation of H3 inhibits Ser-2 phosphorylation by RPS6KA5/MSK1. Phosphorylation at Thr-121 (H2AT120ph) by DCAF1 is present in the regulatory region of many tumor suppresor genes and down-regulates their transcription. In terms of processing, glutamine methylation at Gln-105 (H2AQ104me) by FBL is specifically dedicated to polymerase I. It is present at 35S ribosomal DNA locus and impairs binding of the FACT complex. Symmetric dimethylation on Arg-4 by the PRDM1/PRMT5 complex may play a crucial role in the germ-cell lineage. Post-translationally, crotonylation (Kcr) is specifically present in male germ cells and marks testis-specific genes in post-meiotic cells, including X-linked genes that escape sex chromosome inactivation in haploid cells. Crotonylation marks active promoters and enhancers and confers resistance to transcriptional repressors. It is also associated with post-meiotically activated genes on autosomes. In terms of processing, lactylated in macrophages by EP300/P300 by using lactoyl-CoA directly derived from endogenous or exogenous lactate, leading to stimulates gene transcription.

Its subcellular location is the nucleus. The protein resides in the chromosome. Core component of nucleosome. Nucleosomes wrap and compact DNA into chromatin, limiting DNA accessibility to the cellular machineries which require DNA as a template. Histones thereby play a central role in transcription regulation, DNA repair, DNA replication and chromosomal stability. DNA accessibility is regulated via a complex set of post-translational modifications of histones, also called histone code, and nucleosome remodeling. In Homo sapiens (Human), this protein is Histone H2A type 1-C.